The primary structure comprises 489 residues: Pluviatolide synthase (489 aa).

A helical membrane pass occupies residues 6-26 (SVLAMSSTLILALAMALIFLF). A heme-binding site is contributed by Cys-432.

It belongs to the cytochrome P450 family. Requires heme as cofactor. As to expression, expressed in leaves, rhizomes and stems.

The protein resides in the membrane. The enzyme catalyses (-)-matairesinol + reduced [NADPH--hemoprotein reductase] + O2 = (-)-pluviatolide + oxidized [NADPH--hemoprotein reductase] + 2 H2O + H(+). The protein operates within aromatic compound metabolism; phenylpropanoid biosynthesis. Cytochrome P450 involved in the biosynthesis of etoposide, a chemotherapeutic compound of the topoisomerase inhibitor family. Catalyzes the conversion of matairesinol to pluviatolide. The polypeptide is Pluviatolide synthase (Sinopodophyllum hexandrum (Himalayan may apple)).